The primary structure comprises 176 residues: Large ribosomal subunit protein uL6 (176 aa).

The span at Arg-151–Arg-170 shows a compositional bias: basic and acidic residues. The segment at Arg-151–Lys-176 is disordered.

This sequence belongs to the universal ribosomal protein uL6 family. Part of the 50S ribosomal subunit.

In terms of biological role, this protein binds to the 23S rRNA, and is important in its secondary structure. It is located near the subunit interface in the base of the L7/L12 stalk, and near the tRNA binding site of the peptidyltransferase center. In Shewanella halifaxensis (strain HAW-EB4), this protein is Large ribosomal subunit protein uL6.